Consider the following 122-residue polypeptide: Small ribosomal subunit protein uS10y (122 aa).

It belongs to the universal ribosomal protein uS10 family.

The polypeptide is Small ribosomal subunit protein uS10y (RPS20B) (Arabidopsis thaliana (Mouse-ear cress)).